A 492-amino-acid chain; its full sequence is 2,3-bisphosphoglycerate-independent phosphoglycerate mutase (492 aa).

Positions 11 and 61 each coordinate Mn(2+). The active-site Phosphoserine intermediate is S61. Substrate is bound by residues H118, 147 to 148 (RD), R178, R184, 248 to 251 (RNDR), and K320. Mn(2+) is bound by residues D386, H390, D427, H428, and H445.

The protein belongs to the BPG-independent phosphoglycerate mutase family. Monomer. Requires Mn(2+) as cofactor.

The catalysed reaction is (2R)-2-phosphoglycerate = (2R)-3-phosphoglycerate. It functions in the pathway carbohydrate degradation; glycolysis; pyruvate from D-glyceraldehyde 3-phosphate: step 3/5. Its function is as follows. Catalyzes the interconversion of 2-phosphoglycerate and 3-phosphoglycerate. The chain is 2,3-bisphosphoglycerate-independent phosphoglycerate mutase from Campylobacter jejuni subsp. jejuni serotype O:23/36 (strain 81-176).